A 368-amino-acid chain; its full sequence is Biotin synthase (368 aa).

Positions 74–309 (CCGNVVDLCS…QQILRYAGGR (236 aa)) constitute a Radical SAM core domain. [4Fe-4S] cluster-binding residues include cysteine 92, cysteine 96, and cysteine 99. [2Fe-2S] cluster is bound by residues cysteine 137, cysteine 174, cysteine 234, and arginine 304.

The protein belongs to the radical SAM superfamily. Biotin synthase family. Homodimer. [4Fe-4S] cluster is required as a cofactor. Requires [2Fe-2S] cluster as cofactor.

It carries out the reaction (4R,5S)-dethiobiotin + (sulfur carrier)-SH + 2 reduced [2Fe-2S]-[ferredoxin] + 2 S-adenosyl-L-methionine = (sulfur carrier)-H + biotin + 2 5'-deoxyadenosine + 2 L-methionine + 2 oxidized [2Fe-2S]-[ferredoxin]. It functions in the pathway cofactor biosynthesis; biotin biosynthesis; biotin from 7,8-diaminononanoate: step 2/2. Its function is as follows. Catalyzes the conversion of dethiobiotin (DTB) to biotin by the insertion of a sulfur atom into dethiobiotin via a radical-based mechanism. In Rippkaea orientalis (strain PCC 8801 / RF-1) (Cyanothece sp. (strain PCC 8801)), this protein is Biotin synthase.